The chain runs to 952 residues: Bromodomain testis-specific protein (952 aa).

Residues 26–132 enclose the Bromo 1 domain; that stretch reads RLTNQLQFLQ…KLFMQKLSQM (107 aa). A compositionally biased stretch (basic and acidic residues) spans 141–150; the sequence is GKERMKKDIQ. The tract at residues 141 to 168 is disordered; sequence GKERMKKDIQQKTAVSSAKEQTPSKSAE. The segment covering 151–167 has biased composition (polar residues); it reads QKTAVSSAKEQTPSKSA. Ser186 bears the Phosphoserine mark. The Nuclear localization signal motif lies at 208–219; that stretch reads KGVKRRADTTTP. Residues 209–257 form a disordered region; sequence GVKRRADTTTPTTSSAKASSESPPPLREAKPANAPVKENTVKSVLPDSQ. Residues 216–229 are compositionally biased toward low complexity; it reads TTTPTTSSAKASSE. The Bromo 2 domain maps to 266–375; the sequence is VKVTEQLKHC…DVFEMHFAKI (110 aa). Disordered stretches follow at residues 392–420, 442–504, 607–746, and 850–930; these read SAKA…ERVQ, VPLR…NAKP, QLNC…GCQV, and KHLE…RREA. Residues 417–442 adopt a coiled-coil conformation; it reads ERVQRLAKLQEQLNAVHQQLQVLSQV. Over residues 445 to 463 the composition is skewed to basic residues; sequence RKLKKKNEKSKRAPKRKKV. The NET domain occupies 495–577; the sequence is KLEEEDNAKP…ACLRKRSLKP (83 aa). The segment covering 610–619 has biased composition (basic residues); it reads CRKRQTKRPA. The segment covering 625-638 has biased composition (pro residues); that stretch reads PRPPLPPPPPPPPE. Low complexity predominate over residues 646–681; the sequence is SDSSSSSSSSGSGSSSSSSSSSGSGSSSSDSSSSDS. Residues 718 to 729 show a composition bias toward polar residues; sequence SAETALVQQSTG. A coiled-coil region spans residues 837–936; it reads EKEVKARTQE…RREAMAGTID (100 aa). Over residues 850–867 the composition is skewed to basic and acidic residues; sequence KHLEHSAKDPKVSQESQR. Polar residues predominate over residues 874–883; the sequence is TPESSSNKVQ. Residues 893-902 show a composition bias toward low complexity; sequence EQQQLPSPSE. A compositionally biased stretch (basic and acidic residues) spans 911 to 930; sequence LLKDRNLAREKEQERRRREA.

This sequence belongs to the BET family. As to quaternary structure, interacts with the acetylated N-terminus of histone H1, H2, H3 and H4. Interacts with P-TEFb components CDK9 and CCNT1/cyclin-T1. Interacts with mRNA splicing machinery proteins SRSF2, DDX5, HNRNPK and TARDBP. Interacts with SMARCE1. Ubiquitinated in a SPOP-dependent manner, leading to proteasomal degradation.

It is found in the nucleus. Its function is as follows. Testis-specific chromatin protein that specifically binds histone H4 acetylated at 'Lys-5' and 'Lys-8' (H4K5ac and H4K8ac, respectively) and plays a key role in spermatogenesis. Required in late pachytene spermatocytes: plays a role in meiotic and post-meiotic cells by binding to acetylated histones at the promoter of specific meiotic and post-meiotic genes, facilitating their activation at the appropriate time. In the post-meiotic phase of spermatogenesis, binds to hyperacetylated histones and participates in their general removal from DNA. Also recognizes and binds a subset of butyrylated histones: able to bind histone H4 butyrylated at 'Lys-8' (H4K8ac), while it is not able to bind H4 butyrylated at 'Lys-5' (H4K5ac). Also acts as a component of the splicing machinery in pachytene spermatocytes and round spermatids and participates in 3'-UTR truncation of specific mRNAs in post-meiotic spermatids. Required for chromocenter organization, a structure comprised of peri-centromeric heterochromatin. This Rattus norvegicus (Rat) protein is Bromodomain testis-specific protein (Brdt).